The following is a 108-amino-acid chain: ATP synthase peripheral stalk subunit F6, mitochondrial (108 aa).

A mitochondrion-targeting transit peptide spans 1–32 (MILQRLFRFSSVIRSAVSVHLRRNIGVTAVAF). Residues Lys41 and Lys46 each carry the N6-acetyllysine modification. A Phosphoserine modification is found at Ser65. Lys79 carries the post-translational modification N6-acetyllysine. Residues Lys94 and Lys99 each carry the N6-acetyllysine; alternate modification. Residues Lys94 and Lys99 each carry the N6-succinyllysine; alternate modification. Lys105 bears the N6-acetyllysine mark.

This sequence belongs to the eukaryotic ATPase subunit F6 family. As to quaternary structure, component of the ATP synthase complex composed at least of ATP5F1A/subunit alpha, ATP5F1B/subunit beta, ATP5MC1/subunit c (homooctomer), MT-ATP6/subunit a, MT-ATP8/subunit 8, ATP5ME/subunit e, ATP5MF/subunit f, ATP5MG/subunit g, ATP5MK/subunit k, ATP5MJ/subunit j, ATP5F1C/subunit gamma, ATP5F1D/subunit delta, ATP5F1E/subunit epsilon, ATP5PF/subunit F6, ATP5PB/subunit b, ATP5PD/subunit d, ATP5PO/subunit OSCP. ATP synthase complex consists of a soluble F(1) head domain (subunits alpha(3) and beta(3)) - the catalytic core - and a membrane F(0) domain - the membrane proton channel (subunits c, a, 8, e, f, g, k and j). These two domains are linked by a central stalk (subunits gamma, delta, and epsilon) rotating inside the F1 region and a stationary peripheral stalk (subunits F6, b, d, and OSCP).

The protein localises to the mitochondrion. The protein resides in the mitochondrion inner membrane. Its function is as follows. Subunit F6, of the mitochondrial membrane ATP synthase complex (F(1)F(0) ATP synthase or Complex V) that produces ATP from ADP in the presence of a proton gradient across the membrane which is generated by electron transport complexes of the respiratory chain. ATP synthase complex consist of a soluble F(1) head domain - the catalytic core - and a membrane F(1) domain - the membrane proton channel. These two domains are linked by a central stalk rotating inside the F(1) region and a stationary peripheral stalk. During catalysis, ATP synthesis in the catalytic domain of F(1) is coupled via a rotary mechanism of the central stalk subunits to proton translocation. In vivo, can only synthesize ATP although its ATP hydrolase activity can be activated artificially in vitro. Part of the complex F(0) domain. Part of the complex F(0) domain and the peripheric stalk, which acts as a stator to hold the catalytic alpha(3)beta(3) subcomplex and subunit a/ATP6 static relative to the rotary elements. This chain is ATP synthase peripheral stalk subunit F6, mitochondrial, found in Homo sapiens (Human).